A 354-amino-acid polypeptide reads, in one-letter code: Ferrochelatase (354 aa).

Fe cation is bound by residues His214 and Glu295.

It belongs to the ferrochelatase family.

Its subcellular location is the cytoplasm. The catalysed reaction is heme b + 2 H(+) = protoporphyrin IX + Fe(2+). The protein operates within porphyrin-containing compound metabolism; protoheme biosynthesis; protoheme from protoporphyrin-IX: step 1/1. Its function is as follows. Catalyzes the ferrous insertion into protoporphyrin IX. The sequence is that of Ferrochelatase from Burkholderia ambifaria (strain MC40-6).